A 793-amino-acid chain; its full sequence is Kinesin-associated protein 3 (793 aa).

Position 60 is a phosphoserine (Ser60). Positions 103–119 are enriched in basic and acidic residues; sequence LPGKEKKEKSSKPKDPP. Residues 103–123 are disordered; that stretch reads LPGKEKKEKSSKPKDPPPFEG. 5 ARM repeats span residues 333–373, 374–412, 494–533, 578–620, and 621–662; these read FMEN…NLSF, DTGLRNKMVQVGLLPKLTALLGNENYKQIAMCVLYHISM, DGPTKNLFIDYVGDLAAQISSDEEEEFVIECLGTLANLTI, DDSC…QMVF, and HQAT…IIAE.

As to quaternary structure, interacts with SMC3 subunit of the cohesin complex. Heterotrimer of KIFAP3, KIF3A and KIF3B. Interacts with RAP1GDS1/SMG GDS. Post-translationally, phosphorylated on tyrosine residues by SRC in vitro; this reduces the binding affinity of the protein for RAP1GDS1.

Involved in tethering the chromosomes to the spindle pole and in chromosome movement. Binds to the tail domain of the KIF3A/KIF3B heterodimer to form a heterotrimeric KIF3 complex and may regulate the membrane binding of this complex. This chain is Kinesin-associated protein 3 (Kifap3), found in Mus musculus (Mouse).